The primary structure comprises 264 residues: B3-hordein (264 aa).

Residues 1 to 15 (QQPVSRQPQQIIPQQ) are compositionally biased toward low complexity. The segment at 1-66 (QQPVSRQPQQ…QQPFPQQPPF (66 aa)) is disordered. Pro residues-rich tracts occupy residues 16-44 (PQQP…PYPQ) and 52-64 (QPFP…PQQP).

The protein belongs to the gliadin/glutenin family. Developing endosperm.

In terms of biological role, sulfur-rich seed storage protein. In Hordeum vulgare (Barley), this protein is B3-hordein.